The primary structure comprises 580 residues: Type 3 secretion system translocon protein SctE (580 aa).

2 consecutive transmembrane segments (helical) span residues 313–333 and 399–419; these read ILGALLTIVSVVAAAFSGGAS and IGSILGAIAGALVLVAAVVLV.

Belongs to the SctE/SipB/YopB family. In terms of assembly, the core secretion machinery of the T3SS is composed of approximately 20 different proteins, including cytoplasmic components, a base, an export apparatus and a needle. This subunit is involved in the formation of a pore, called the translocon, in host membrane.

The protein resides in the secreted. Its subcellular location is the host membrane. Its function is as follows. Component of the type III secretion system (T3SS), also called injectisome, which is used to inject bacterial effector proteins into eukaryotic host cells. IpaB/SctE and IpaC/SctB are inserted into the host membrane where they form a pore and allow the translocation of effector proteins into the cytosol of target cells. In Shigella dysenteriae, this protein is Type 3 secretion system translocon protein SctE.